The chain runs to 115 residues: U3-lycotoxin-Ls1k (115 aa).

The signal sequence occupies residues 1–20 (MKFVLLFGVLLVALFSYSSA). A propeptide spanning residues 21 to 44 (EMLDDFGQADEDELLSLIEKEEAR) is cleaved from the precursor. Cystine bridges form between cysteine 48–cysteine 63, cysteine 55–cysteine 72, cysteine 62–cysteine 87, and cysteine 74–cysteine 85.

This sequence belongs to the neurotoxin 19 (CSTX) family. 01 subfamily. Expressed by the venom gland.

It localises to the secreted. This chain is U3-lycotoxin-Ls1k, found in Lycosa singoriensis (Wolf spider).